Here is a 184-residue protein sequence, read N- to C-terminus: ATP synthase subunit b, chloroplastic (184 aa).

A helical transmembrane segment spans residues 26–48 (ILATNLINLSVVLGVLIFFGKGV).

The protein belongs to the ATPase B chain family. As to quaternary structure, F-type ATPases have 2 components, F(1) - the catalytic core - and F(0) - the membrane proton channel. F(1) has five subunits: alpha(3), beta(3), gamma(1), delta(1), epsilon(1). F(0) has four main subunits: a(1), b(1), b'(1) and c(10-14). The alpha and beta chains form an alternating ring which encloses part of the gamma chain. F(1) is attached to F(0) by a central stalk formed by the gamma and epsilon chains, while a peripheral stalk is formed by the delta, b and b' chains.

It localises to the plastid. The protein resides in the chloroplast thylakoid membrane. Functionally, f(1)F(0) ATP synthase produces ATP from ADP in the presence of a proton or sodium gradient. F-type ATPases consist of two structural domains, F(1) containing the extramembraneous catalytic core and F(0) containing the membrane proton channel, linked together by a central stalk and a peripheral stalk. During catalysis, ATP synthesis in the catalytic domain of F(1) is coupled via a rotary mechanism of the central stalk subunits to proton translocation. Component of the F(0) channel, it forms part of the peripheral stalk, linking F(1) to F(0). This chain is ATP synthase subunit b, chloroplastic, found in Calycanthus floridus var. glaucus (Eastern sweetshrub).